The sequence spans 100 residues: Urease subunit gamma (100 aa).

It belongs to the urease gamma subunit family. In terms of assembly, heterotrimer of UreA (gamma), UreB (beta) and UreC (alpha) subunits. Three heterotrimers associate to form the active enzyme.

The protein resides in the cytoplasm. The catalysed reaction is urea + 2 H2O + H(+) = hydrogencarbonate + 2 NH4(+). It functions in the pathway nitrogen metabolism; urea degradation; CO(2) and NH(3) from urea (urease route): step 1/1. This is Urease subunit gamma from Ectopseudomonas mendocina (strain ymp) (Pseudomonas mendocina).